The primary structure comprises 370 residues: 3-dehydroquinate synthase (370 aa).

Residues 112 to 116 (GVIGD), 136 to 137 (TT), lysine 149, lysine 158, and 176 to 179 (TLKT) contribute to the NAD(+) site. Glutamate 191, histidine 256, and histidine 273 together coordinate Zn(2+).

It belongs to the sugar phosphate cyclases superfamily. Dehydroquinate synthase family. It depends on Co(2+) as a cofactor. Zn(2+) serves as cofactor. The cofactor is NAD(+).

Its subcellular location is the cytoplasm. The enzyme catalyses 7-phospho-2-dehydro-3-deoxy-D-arabino-heptonate = 3-dehydroquinate + phosphate. It functions in the pathway metabolic intermediate biosynthesis; chorismate biosynthesis; chorismate from D-erythrose 4-phosphate and phosphoenolpyruvate: step 2/7. Its function is as follows. Catalyzes the conversion of 3-deoxy-D-arabino-heptulosonate 7-phosphate (DAHP) to dehydroquinate (DHQ). This Prochlorococcus marinus (strain MIT 9211) protein is 3-dehydroquinate synthase.